The chain runs to 494 residues: One cut domain family member 3 (494 aa).

3 disordered regions span residues 130–162, 199–239, and 295–319; these read AAAV…RLAA, LSPL…GDKL, and AHGP…AAAE. 2 stretches are compositionally biased toward pro residues: residues 148–158 and 214–225; these read AAAPPPPPPPQ and PQPPPPPPPPPL. The segment covering 297 to 313 has biased composition (gly residues); it reads GPHGGGGGPGGSGGGPS. Residues 312–398 constitute a DNA-binding region (CUT); it reads PSAGAAAEEI…QRMSALRLAA (87 aa). The homeobox DNA-binding region spans 414-473; sequence PKKQRLVFTDLQRRTLIAIFKENKRPSKEMQVTISQQLGLELNTVSNFFMNARRRCMNRW. The segment at 475–494 is disordered; sequence EEPSTAPGGPAGATATFSKA. The span at 476–494 shows a compositional bias: low complexity; sequence EPSTAPGGPAGATATFSKA.

It belongs to the CUT homeobox family.

The protein localises to the nucleus. Its function is as follows. Transcriptional activator. Binds the consensus DNA sequence 5'-DHWATTGAYTWWD-3' on a variety of gene promoters such as those of HNF3B and TTR. The chain is One cut domain family member 3 (ONECUT3) from Homo sapiens (Human).